The following is a 236-amino-acid chain: Large ribosomal subunit protein uL3 (236 aa).

This sequence belongs to the universal ribosomal protein uL3 family. As to quaternary structure, part of the 50S ribosomal subunit. Forms a cluster with proteins L14 and L19.

Its function is as follows. One of the primary rRNA binding proteins, it binds directly near the 3'-end of the 23S rRNA, where it nucleates assembly of the 50S subunit. In Anaeromyxobacter dehalogenans (strain 2CP-C), this protein is Large ribosomal subunit protein uL3.